A 515-amino-acid polypeptide reads, in one-letter code: Glucose-6-phosphate 1-dehydrogenase (515 aa).

A2 carries the N-acetylalanine modification. Residue S8 is modified to Phosphoserine. T10 carries the post-translational modification Phosphothreonine. NADP(+)-binding positions include 38–45 and R72; that span reads GASGDLAK. Residue K89 is modified to N6-acetyllysine. Positions 147 and 171 each coordinate NADP(+). D-glucose 6-phosphate-binding positions include K171, 201–205, E239, and D258; that span reads HYLGK. Residue K171 is modified to N6-(2-hydroxyisobutyryl)lysine; alternate. Position 171 is an N6-acetyllysine; alternate (K171). H263 functions as the Proton acceptor in the catalytic mechanism. Position 357 (R357) interacts with NADP(+). D-glucose 6-phosphate-binding residues include K360 and R365. Positions 366, 370, and 393 each coordinate NADP(+). Residue Q395 participates in D-glucose 6-phosphate binding. Residues 401 to 403 and 421 to 423 contribute to the NADP(+) site; these read YTK and DLT. K403 bears the N6-acetyllysine mark. K432 is modified (N6-acetyllysine). R487 is an NADP(+) binding site. At K497 the chain carries N6-acetyllysine. 2 residues coordinate NADP(+): Y503 and W509. Position 503 is a phosphotyrosine (Y503).

This sequence belongs to the glucose-6-phosphate dehydrogenase family. In terms of assembly, homotetramer; dimer of dimers. Interacts with SIRT2; the interaction is enhanced by H(2)O(2) treatment. Forms a ternary complex with ALDOB and TP53; this interaction is direct. ALDOB stabilizes the complex inhibiting G6PD activity and keeping oxidative pentose phosphate metabolism in check. Post-translationally, acetylated by ELP3 at Lys-403; acetylation inhibits its homodimerization and enzyme activity. Deacetylated by SIRT2 at Lys-403; deacetylation stimulates its enzyme activity.

Its subcellular location is the cytoplasm. The protein resides in the cytosol. It is found in the membrane. The catalysed reaction is D-glucose 6-phosphate + NADP(+) = 6-phospho-D-glucono-1,5-lactone + NADPH + H(+). Its pathway is carbohydrate degradation; pentose phosphate pathway; D-ribulose 5-phosphate from D-glucose 6-phosphate (oxidative stage): step 1/3. Its function is as follows. Cytosolic glucose-6-phosphate dehydrogenase that catalyzes the first and rate-limiting step of the oxidative branch within the pentose phosphate pathway/shunt, an alternative route to glycolysis for the dissimilation of carbohydrates and a major source of reducing power and metabolic intermediates for fatty acid and nucleic acid biosynthetic processes. This chain is Glucose-6-phosphate 1-dehydrogenase (G6PD), found in Cricetulus griseus (Chinese hamster).